The primary structure comprises 154 residues: Endoribonuclease YbeY (154 aa).

Zn(2+) contacts are provided by histidine 118, histidine 122, and histidine 128.

This sequence belongs to the endoribonuclease YbeY family. Zn(2+) is required as a cofactor.

It localises to the cytoplasm. Its function is as follows. Single strand-specific metallo-endoribonuclease involved in late-stage 70S ribosome quality control and in maturation of the 3' terminus of the 16S rRNA. In Macrococcus caseolyticus (strain JCSC5402) (Macrococcoides caseolyticum), this protein is Endoribonuclease YbeY.